The chain runs to 351 residues: UDP-N-acetylenolpyruvoylglucosamine reductase (351 aa).

The region spanning 11 to 213 is the FAD-binding PCMH-type domain; sequence GVGGSIACFI…KQVRDQVLRI (203 aa). Arg-158 is an active-site residue. The Proton donor role is filled by Ser-239. Glu-343 is a catalytic residue.

The protein belongs to the MurB family. It depends on FAD as a cofactor.

The protein localises to the cytoplasm. The catalysed reaction is UDP-N-acetyl-alpha-D-muramate + NADP(+) = UDP-N-acetyl-3-O-(1-carboxyvinyl)-alpha-D-glucosamine + NADPH + H(+). It functions in the pathway cell wall biogenesis; peptidoglycan biosynthesis. Functionally, cell wall formation. This Tropheryma whipplei (strain Twist) (Whipple's bacillus) protein is UDP-N-acetylenolpyruvoylglucosamine reductase.